The primary structure comprises 360 residues: Probable cinnamyl alcohol dehydrogenase 1 (360 aa).

Residue Cys47 participates in Zn(2+) binding. Residue Thr49 participates in NADP(+) binding. Zn(2+)-binding residues include His69, Glu70, Cys100, Cys103, Cys106, Cys114, and Cys163. NADP(+)-binding positions include Thr167, 189-194 (GLGGVG), 212-217 (SSSDKK), Thr252, Gly276, and 299-301 (SFI).

This sequence belongs to the zinc-containing alcohol dehydrogenase family. As to quaternary structure, homodimer. Zn(2+) is required as a cofactor.

It catalyses the reaction (E)-cinnamyl alcohol + NADP(+) = (E)-cinnamaldehyde + NADPH + H(+). It carries out the reaction (E)-coniferol + NADP(+) = (E)-coniferaldehyde + NADPH + H(+). The catalysed reaction is (E)-sinapyl alcohol + NADP(+) = (E)-sinapaldehyde + NADPH + H(+). The enzyme catalyses (E)-4-coumaroyl alcohol + NADP(+) = (E)-4-coumaraldehyde + NADPH + H(+). It catalyses the reaction (E)-caffeyl alcohol + NADP(+) = (E)-caffeyl aldehyde + NADPH + H(+). Its pathway is aromatic compound metabolism; phenylpropanoid biosynthesis. Its function is as follows. Involved in lignin biosynthesis. Catalyzes the final step specific for the production of lignin monomers. Catalyzes the NADPH-dependent reduction of coniferaldehyde, 5-hydroxyconiferaldehyde, sinapaldehyde, 4-coumaraldehyde and caffeyl aldehyde to their respective alcohols. The protein is Probable cinnamyl alcohol dehydrogenase 1 (CAD1) of Aralia cordata (Udo).